We begin with the raw amino-acid sequence, 486 residues long: Putative protease Do-like 13 (486 aa).

Residues 44–229 (KINTFSSKPN…IPAPVVKHFI (186 aa)) are serine protease. Catalysis depends on charge relay system residues histidine 83, aspartate 114, and serine 192. The region spanning 241-334 (FCSLNLSYQH…TILLKILREG (94 aa)) is the PDZ domain.

Belongs to the peptidase S1C family.

Its function is as follows. Putative serine protease. The sequence is that of Putative protease Do-like 13 (DEGP13) from Arabidopsis thaliana (Mouse-ear cress).